The chain runs to 201 residues: Recombination protein RecR (201 aa).

A C4-type zinc finger spans residues 60 to 75 (CQVCGNVDVRDPCTVC). In terms of domain architecture, Toprim spans 83-178 (SVLVVVAEVA…KVTRLAHGVP (96 aa)).

It belongs to the RecR family.

Functionally, may play a role in DNA repair. It seems to be involved in an RecBC-independent recombinational process of DNA repair. It may act with RecF and RecO. In Azorhizobium caulinodans (strain ATCC 43989 / DSM 5975 / JCM 20966 / LMG 6465 / NBRC 14845 / NCIMB 13405 / ORS 571), this protein is Recombination protein RecR.